The following is a 148-amino-acid chain: Large ribosomal subunit protein bL9 (148 aa).

Belongs to the bacterial ribosomal protein bL9 family.

In terms of biological role, binds to the 23S rRNA. This chain is Large ribosomal subunit protein bL9, found in Thermobifida fusca (strain YX).